Here is a 449-residue protein sequence, read N- to C-terminus: UDP-glycosyltransferase 76E7 (449 aa).

UDP-alpha-D-glucose is bound by residues serine 275, 333-335 (APQ), 350-358 (HCGWNSTLE), and 372-375 (TTDQ).

This sequence belongs to the UDP-glycosyltransferase family.

The sequence is that of UDP-glycosyltransferase 76E7 (UGT76E7) from Arabidopsis thaliana (Mouse-ear cress).